The following is a 350-amino-acid chain: Dihydroorotase (350 aa).

Residues histidine 17 and histidine 19 each contribute to the Zn(2+) site. Residues 19–21 (HLR) and asparagine 45 contribute to the substrate site. 3 residues coordinate Zn(2+): lysine 103, histidine 140, and histidine 178. Lysine 103 carries the post-translational modification N6-carboxylysine. Histidine 140 is a binding site for substrate. Leucine 224 lines the substrate pocket. Position 252 (aspartate 252) interacts with Zn(2+). Residue aspartate 252 is part of the active site. Residues histidine 256 and alanine 268 each contribute to the substrate site.

Belongs to the metallo-dependent hydrolases superfamily. DHOase family. Class II DHOase subfamily. As to quaternary structure, homodimer. It depends on Zn(2+) as a cofactor.

It catalyses the reaction (S)-dihydroorotate + H2O = N-carbamoyl-L-aspartate + H(+). It participates in pyrimidine metabolism; UMP biosynthesis via de novo pathway; (S)-dihydroorotate from bicarbonate: step 3/3. In terms of biological role, catalyzes the reversible cyclization of carbamoyl aspartate to dihydroorotate. In Buchnera aphidicola subsp. Acyrthosiphon pisum (strain APS) (Acyrthosiphon pisum symbiotic bacterium), this protein is Dihydroorotase.